A 626-amino-acid polypeptide reads, in one-letter code: Polypeptide N-acetylgalactosaminyltransferase 5 (626 aa).

At Met1 to Lys11 the chain is on the cytoplasmic side. The helical; Signal-anchor for type II membrane protein transmembrane segment at Val12–Ser31 threads the bilayer. Asn32 carries N-linked (GlcNAc...) asparagine glycosylation. Residues Asn32–Ser626 lie on the Lumenal side of the membrane. Cystine bridges form between Cys165/Cys399, Cys390/Cys466, Cys502/Cys521, Cys544/Cys557, and Cys583/Cys598. The tract at residues Leu174–Arg284 is catalytic subdomain A. Substrate contacts are provided by Asp215 and Arg245. A Mn(2+)-binding site is contributed by Asp268. Residue Ser269 participates in substrate binding. His270 contributes to the Mn(2+) binding site. The N-linked (GlcNAc...) asparagine glycan is linked to Asn338. The segment at Pro345 to Arg407 is catalytic subdomain B. Trp376 contributes to the substrate binding site. Residue His404 participates in Mn(2+) binding. Residues Arg407 and Tyr412 each contribute to the substrate site. A Ricin B-type lectin domain is found at Ala488–Lys610.

It belongs to the glycosyltransferase 2 family. GalNAc-T subfamily. Mn(2+) serves as cofactor.

It is found in the golgi apparatus membrane. It catalyses the reaction L-seryl-[protein] + UDP-N-acetyl-alpha-D-galactosamine = a 3-O-[N-acetyl-alpha-D-galactosaminyl]-L-seryl-[protein] + UDP + H(+). The catalysed reaction is L-threonyl-[protein] + UDP-N-acetyl-alpha-D-galactosamine = a 3-O-[N-acetyl-alpha-D-galactosaminyl]-L-threonyl-[protein] + UDP + H(+). Its pathway is protein modification; protein glycosylation. In terms of biological role, catalyzes the initial reaction in O-linked oligosaccharide biosynthesis, the transfer of an N-acetyl-D-galactosamine residue to a serine or threonine residue on the protein receptor. This Caenorhabditis elegans protein is Polypeptide N-acetylgalactosaminyltransferase 5 (gly-5).